The sequence spans 29 residues: Cyclotide mang-A (29 aa).

The segment at residues 1 to 29 (GFPTCGETCTLGTCNTPGCTCSWPICTRD) is a cross-link (cyclopeptide (Gly-Asp)). Intrachain disulfides connect C5/C19, C9/C21, and C14/C26.

This sequence belongs to the cyclotide family. Moebius subfamily. In terms of processing, this is a cyclic peptide.

Its function is as follows. Probably participates in a plant defense mechanism. This is Cyclotide mang-A from Melicytus angustifolius (Hymenanthera angustifolia).